The sequence spans 213 residues: Orotate phosphoribosyltransferase (213 aa).

Lys-26 is a 5-phospho-alpha-D-ribose 1-diphosphate binding site. 34 to 35 (FF) is an orotate binding site. 5-phospho-alpha-D-ribose 1-diphosphate is bound by residues 72–73 (YK), Arg-99, Lys-100, Lys-103, His-105, and 124–132 (DDVITAGTA). Orotate contacts are provided by Thr-128 and Arg-156.

This sequence belongs to the purine/pyrimidine phosphoribosyltransferase family. PyrE subfamily. As to quaternary structure, homodimer. Requires Mg(2+) as cofactor.

The catalysed reaction is orotidine 5'-phosphate + diphosphate = orotate + 5-phospho-alpha-D-ribose 1-diphosphate. The protein operates within pyrimidine metabolism; UMP biosynthesis via de novo pathway; UMP from orotate: step 1/2. Catalyzes the transfer of a ribosyl phosphate group from 5-phosphoribose 1-diphosphate to orotate, leading to the formation of orotidine monophosphate (OMP). The polypeptide is Orotate phosphoribosyltransferase (Saccharophagus degradans (strain 2-40 / ATCC 43961 / DSM 17024)).